A 627-amino-acid chain; its full sequence is Probable inactive L-type lectin-domain containing receptor kinase III.1 (627 aa).

A signal peptide spans 1–23 (MITFKSIALTIIFLSYFVSCVSS). The Extracellular segment spans residues 24 to 303 (QRETKFLNHG…STEKKSNNTM (280 aa)). Residues 26-262 (ETKFLNHGFL…SHFVLGWSFN (237 aa)) form a legume-lectin like region. N-linked (GlcNAc...) asparagine glycans are attached at residues asparagine 57, asparagine 78, asparagine 127, asparagine 184, asparagine 202, asparagine 209, and asparagine 230. The disordered stretch occupies residues 272 to 297 (ITKLPSLPDPPPTLSPSPSPPVSTEK). Residues 278-292 (LPDPPPTLSPSPSPP) are compositionally biased toward pro residues. Asparagine 300 is a glycosylation site (N-linked (GlcNAc...) asparagine). The chain crosses the membrane as a helical span at residues 304–324 (LIIIVAASATVALMILIFSGF). Residues 325–627 (WFLRRDKIFF…PHDDYLFYGV (303 aa)) are Cytoplasmic-facing. Residues 353 to 623 (FDNSKLLGER…TEALPHDDYL (271 aa)) enclose the Protein kinase domain. Residues 359–367 (LGERNSGSF) and lysine 381 each bind ATP.

This sequence in the C-terminal section; belongs to the protein kinase superfamily. Ser/Thr protein kinase family. The protein in the N-terminal section; belongs to the leguminous lectin family.

The protein resides in the cell membrane. This Arabidopsis thaliana (Mouse-ear cress) protein is Probable inactive L-type lectin-domain containing receptor kinase III.1 (LECRK31).